The following is a 536-amino-acid chain: Chaperonin GroEL (536 aa).

ATP-binding positions include 30-33 (TLGP), 86-90 (DGTTT), glycine 414, and aspartate 494.

This sequence belongs to the chaperonin (HSP60) family. As to quaternary structure, forms a cylinder of 14 subunits composed of two heptameric rings stacked back-to-back. Interacts with the co-chaperonin GroES.

Its subcellular location is the cytoplasm. It carries out the reaction ATP + H2O + a folded polypeptide = ADP + phosphate + an unfolded polypeptide.. Its function is as follows. Together with its co-chaperonin GroES, plays an essential role in assisting protein folding. The GroEL-GroES system forms a nano-cage that allows encapsulation of the non-native substrate proteins and provides a physical environment optimized to promote and accelerate protein folding. The polypeptide is Chaperonin GroEL (Methanospirillum hungatei JF-1 (strain ATCC 27890 / DSM 864 / NBRC 100397 / JF-1)).